Reading from the N-terminus, the 271-residue chain is NH(3)-dependent NAD(+) synthetase (271 aa).

Residue 43-50 coordinates ATP; the sequence is GISGGQDS. Position 49 (aspartate 49) interacts with Mg(2+). Arginine 137 provides a ligand contact to deamido-NAD(+). Threonine 157 lines the ATP pocket. Glutamate 162 contacts Mg(2+). Positions 170 and 177 each coordinate deamido-NAD(+). ATP contacts are provided by lysine 186 and threonine 208. 257–258 provides a ligand contact to deamido-NAD(+); it reads HK.

The protein belongs to the NAD synthetase family. In terms of assembly, homodimer.

It catalyses the reaction deamido-NAD(+) + NH4(+) + ATP = AMP + diphosphate + NAD(+) + H(+). It functions in the pathway cofactor biosynthesis; NAD(+) biosynthesis; NAD(+) from deamido-NAD(+) (ammonia route): step 1/1. Functionally, catalyzes the ATP-dependent amidation of deamido-NAD to form NAD. Uses ammonia as a nitrogen source. In Exiguobacterium sibiricum (strain DSM 17290 / CCUG 55495 / CIP 109462 / JCM 13490 / 255-15), this protein is NH(3)-dependent NAD(+) synthetase.